The primary structure comprises 381 residues: Chorismate synthase (381 aa).

NADP(+) is bound by residues R39 and R45. FMN is bound by residues R127 to S129, Q248 to S249, G293, K308 to T312, and R334.

Belongs to the chorismate synthase family. In terms of assembly, homotetramer. The cofactor is FMNH2.

It catalyses the reaction 5-O-(1-carboxyvinyl)-3-phosphoshikimate = chorismate + phosphate. It functions in the pathway metabolic intermediate biosynthesis; chorismate biosynthesis; chorismate from D-erythrose 4-phosphate and phosphoenolpyruvate: step 7/7. In terms of biological role, catalyzes the anti-1,4-elimination of the C-3 phosphate and the C-6 proR hydrogen from 5-enolpyruvylshikimate-3-phosphate (EPSP) to yield chorismate, which is the branch point compound that serves as the starting substrate for the three terminal pathways of aromatic amino acid biosynthesis. This reaction introduces a second double bond into the aromatic ring system. The sequence is that of Chorismate synthase from Caldicellulosiruptor saccharolyticus (strain ATCC 43494 / DSM 8903 / Tp8T 6331).